Reading from the N-terminus, the 191-residue chain is Xanthine phosphoribosyltransferase (191 aa).

Xanthine-binding residues include leucine 20 and asparagine 27. 128-132 (ANGQA) provides a ligand contact to 5-phospho-alpha-D-ribose 1-diphosphate. Lysine 156 provides a ligand contact to xanthine.

This sequence belongs to the purine/pyrimidine phosphoribosyltransferase family. Xpt subfamily. In terms of assembly, homodimer.

It is found in the cytoplasm. The catalysed reaction is XMP + diphosphate = xanthine + 5-phospho-alpha-D-ribose 1-diphosphate. It participates in purine metabolism; XMP biosynthesis via salvage pathway; XMP from xanthine: step 1/1. In terms of biological role, converts the preformed base xanthine, a product of nucleic acid breakdown, to xanthosine 5'-monophosphate (XMP), so it can be reused for RNA or DNA synthesis. This chain is Xanthine phosphoribosyltransferase, found in Levilactobacillus brevis (strain ATCC 367 / BCRC 12310 / CIP 105137 / JCM 1170 / LMG 11437 / NCIMB 947 / NCTC 947) (Lactobacillus brevis).